A 59-amino-acid chain; its full sequence is UPF0434 protein GOX0764 (59 aa).

It belongs to the UPF0434 family.

The polypeptide is UPF0434 protein GOX0764 (Gluconobacter oxydans (strain 621H) (Gluconobacter suboxydans)).